The sequence spans 299 residues: Acetylglutamate kinase (299 aa).

Residues 68–69 (GG), arginine 90, and asparagine 195 each bind substrate.

Belongs to the acetylglutamate kinase family. ArgB subfamily.

It localises to the cytoplasm. The enzyme catalyses N-acetyl-L-glutamate + ATP = N-acetyl-L-glutamyl 5-phosphate + ADP. The protein operates within amino-acid biosynthesis; L-arginine biosynthesis; N(2)-acetyl-L-ornithine from L-glutamate: step 2/4. Its function is as follows. Catalyzes the ATP-dependent phosphorylation of N-acetyl-L-glutamate. The protein is Acetylglutamate kinase of Erythrobacter litoralis (strain HTCC2594).